A 79-amino-acid polypeptide reads, in one-letter code: Polcalcin Bra r 1 (79 aa).

2 EF-hand domains span residues Met1–Val36 and Asp39–Leu71. 10 residues coordinate Ca(2+): Asp14, Asp16, Asp18, Lys20, Glu25, Asp49, Asp51, Asp53, Asn55, and Glu60.

The sequence is that of Polcalcin Bra r 1 from Brassica campestris (Field mustard).